A 385-amino-acid chain; its full sequence is 8-amino-7-oxononanoate synthase (385 aa).

Arginine 21 is a substrate binding site. 108-109 is a binding site for pyridoxal 5'-phosphate; the sequence is GF. Position 133 (histidine 133) interacts with substrate. 3 residues coordinate pyridoxal 5'-phosphate: serine 179, histidine 207, and threonine 233. Position 236 is an N6-(pyridoxal phosphate)lysine (lysine 236). Residue threonine 352 participates in substrate binding.

It belongs to the class-II pyridoxal-phosphate-dependent aminotransferase family. BioF subfamily. In terms of assembly, homodimer. Pyridoxal 5'-phosphate serves as cofactor.

It catalyses the reaction 6-carboxyhexanoyl-[ACP] + L-alanine + H(+) = (8S)-8-amino-7-oxononanoate + holo-[ACP] + CO2. Its pathway is cofactor biosynthesis; biotin biosynthesis. Catalyzes the decarboxylative condensation of pimeloyl-[acyl-carrier protein] and L-alanine to produce 8-amino-7-oxononanoate (AON), [acyl-carrier protein], and carbon dioxide. This chain is 8-amino-7-oxononanoate synthase, found in Salmonella arizonae (strain ATCC BAA-731 / CDC346-86 / RSK2980).